Reading from the N-terminus, the 319-residue chain is MPVKVIEGLPAIDELRADNIFVMDNERAKNQNIRPLNLLVVNLMPRKLITDRQILRLLSNTPLQINVDFLFMASHEFKNTKQSHLDSFYKSFSEIKDDYYDGLIITGAPVEQLEFEEVDYWSEFLEIVKWSKSHVYSSLHICWGAQAALYARYEVTKENLPQKLCGIYKSSVEQPKNPLFRGFDDFFNYPQSRYTQSNPSEIKKVPDLEVLSTSKETGFSILAKKNLREVYLFGHLEYDRETLAWEYERDREEGLKPALPKNYFPKDNDKEKPQMSWASAASLFFSNWLNYAVYQGTPYLGERLGHHCGEENYDFNQKE.

C142 serves as the catalytic Acyl-thioester intermediate. Substrate-binding residues include K163 and S192. H235 acts as the Proton acceptor in catalysis. E237 is a catalytic residue. R249 lines the substrate pocket.

This sequence belongs to the MetA family.

The protein localises to the cytoplasm. The catalysed reaction is L-homoserine + acetyl-CoA = O-acetyl-L-homoserine + CoA. It participates in amino-acid biosynthesis; L-methionine biosynthesis via de novo pathway; O-acetyl-L-homoserine from L-homoserine: step 1/1. Its function is as follows. Transfers an acetyl group from acetyl-CoA to L-homoserine, forming acetyl-L-homoserine. The polypeptide is Homoserine O-acetyltransferase (Lactococcus lactis subsp. cremoris (strain MG1363)).